The chain runs to 1242 residues: ATP-dependent helicase/nuclease subunit A (1242 aa).

A UvrD-like helicase ATP-binding domain is found at S12–R487. An ATP-binding site is contributed by A33 to T40. In terms of domain architecture, UvrD-like helicase C-terminal spans A514 to G808.

Belongs to the helicase family. AddA subfamily. As to quaternary structure, heterodimer of AddA and AddB/RexB. Requires Mg(2+) as cofactor.

The catalysed reaction is Couples ATP hydrolysis with the unwinding of duplex DNA by translocating in the 3'-5' direction.. It catalyses the reaction ATP + H2O = ADP + phosphate + H(+). Functionally, the heterodimer acts as both an ATP-dependent DNA helicase and an ATP-dependent, dual-direction single-stranded exonuclease. Recognizes the chi site generating a DNA molecule suitable for the initiation of homologous recombination. The AddA nuclease domain is required for chi fragment generation; this subunit has the helicase and 3' -&gt; 5' nuclease activities. The sequence is that of ATP-dependent helicase/nuclease subunit A from Geobacillus kaustophilus (strain HTA426).